Consider the following 333-residue polypeptide: GTP 3',8-cyclase (333 aa).

A Radical SAM core domain is found at 7 to 221 (KFGRVHDYIR…FEACNEAGYE (215 aa)). R16 lines the GTP pocket. Residues C23 and C27 each contribute to the [4Fe-4S] cluster site. Y29 provides a ligand contact to S-adenosyl-L-methionine. [4Fe-4S] cluster is bound at residue C30. R66 lines the GTP pocket. G70 is a binding site for S-adenosyl-L-methionine. T97 is a GTP binding site. S121 provides a ligand contact to S-adenosyl-L-methionine. GTP is bound at residue K158. M192 contacts S-adenosyl-L-methionine. [4Fe-4S] cluster-binding residues include C257 and C260. Residue 262 to 264 (RLR) coordinates GTP. C274 contacts [4Fe-4S] cluster.

The protein belongs to the radical SAM superfamily. MoaA family. As to quaternary structure, monomer and homodimer. The cofactor is [4Fe-4S] cluster.

The catalysed reaction is GTP + AH2 + S-adenosyl-L-methionine = (8S)-3',8-cyclo-7,8-dihydroguanosine 5'-triphosphate + 5'-deoxyadenosine + L-methionine + A + H(+). Its pathway is cofactor biosynthesis; molybdopterin biosynthesis. Functionally, catalyzes the cyclization of GTP to (8S)-3',8-cyclo-7,8-dihydroguanosine 5'-triphosphate. In Listeria monocytogenes serotype 4b (strain CLIP80459), this protein is GTP 3',8-cyclase.